Reading from the N-terminus, the 259-residue chain is MQQMVPASGYDRAITIFSPEGRLYQVEYAREAVRRGTTAVGIKCNDGVVLAVDRRITSKLIDVSSIEKIFQIDDHIVAATSGLVADARVLIDRARLEAQMNRISYGEAITVEALAKKICDIKQAYTQHGGARPFGLALLITGIDRHSARLFETDPSGALIEYKATAIGSGRPIAMEVLESKYDENMIVSEGMELALYALSKTTEELKPENIDMAIVKDSGKLVEKISVDEIEKIVKAVYKKVEAEEAEAEKNKVEEDIE.

Belongs to the peptidase T1A family. The 20S proteasome core is composed of 14 alpha and 14 beta subunits that assemble into four stacked heptameric rings, resulting in a barrel-shaped structure. The two inner rings, each composed of seven catalytic beta subunits, are sandwiched by two outer rings, each composed of seven alpha subunits. The catalytic chamber with the active sites is on the inside of the barrel. Has a gated structure, the ends of the cylinder being occluded by the N-termini of the alpha-subunits. Is capped at one or both ends by the proteasome regulatory ATPase, PAN.

Its subcellular location is the cytoplasm. Its activity is regulated as follows. The formation of the proteasomal ATPase PAN-20S proteasome complex, via the docking of the C-termini of PAN into the intersubunit pockets in the alpha-rings, triggers opening of the gate for substrate entry. Interconversion between the open-gate and close-gate conformations leads to a dynamic regulation of the 20S proteasome proteolysis activity. Component of the proteasome core, a large protease complex with broad specificity involved in protein degradation. This chain is Proteasome subunit alpha, found in Methanococcus maripaludis (strain C6 / ATCC BAA-1332).